Consider the following 94-residue polypeptide: MGNCNKPPKRPPNTQTSAAQPSAEFRRTALPSLYGRYNCKCCWFADTNLITCNDHYLCLRCHQTMLRNSELCHICWKPLPTSITVPVEPSAPPP.

A disordered region spans residues 1–22; sequence MGNCNKPPKRPPNTQTSAAQPS. Glycine 2 carries the N-myristoyl glycine; by host lipid modification. Residues 39–75 form an RING-type; atypical zinc finger; sequence CKCCWFADTNLITCNDHYLCLRCHQTMLRNSELCHIC. The PTAP/PSAP motif signature appears at 89 to 92; that stretch reads PSAP.

The protein belongs to the arenaviridae Z protein family. As to quaternary structure, interacts with protein NP; this interaction probably directs the encapsidated genome to budding sites. Interacts (via RING domain) with polymerase L; this interaction inhibits viral transcription and replication, Z partially blocks the product exit tunnel for the releasing nascent RNA product. Interacts with the glycoprotein complex; this interaction plays a role in virion budding. Interacts with host eIF4E; this interaction results in eIF4E reduced affinity for its substrate, the 5'-m7 G cap structure. Interacts (via late-budding domain) with host TSG101; this interaction is essential for budding and release of viral particles. Interacts with host RPLP0; this interaction may serve to load ribosome-like particles inside the virion. Interacts with host PML; this interaction induces PML bodies redistribution in the cytoplasm upon viral infection. Myristoylation is required for the role of RING finger protein Z in assembly and budding.

It is found in the virion. The protein resides in the host cytoplasm. It localises to the host perinuclear region. The protein localises to the host cell membrane. Functionally, plays a crucial role in virion assembly and budding. Expressed late in the virus life cycle, it acts as an inhibitor of viral transcription and RNA synthesis by interacting with the viral polymerase L. Presumably recruits the NP encapsidated genome to cellular membranes at budding sites via direct interaction with NP. Plays critical roles in the final steps of viral release by interacting with host TSG101, a member of the vacuolar protein-sorting pathway and using other cellular host proteins involved in vesicle formation pathway. The budding of the virus progeny occurs after association of protein Z with the viral glycoprotein complex SSP-GP1-GP2 at the cell periphery, step that requires myristoylation of protein Z. Also selectively represses protein production by associating with host eIF4E. In cell-based minigenome assay, has an inhibitory effect on the ribonucleoprotein machinery (vRNP), which is responsible for the replication and transcription of the viral genome. The chain is RING finger protein Z from Calomys callosus (Large vesper mouse).